We begin with the raw amino-acid sequence, 205 residues long: Holliday junction resolvase RecU (205 aa).

The segment at 1–22 (MAINYPAGTRRRTAQAKNTMRT) is disordered. Mg(2+)-binding residues include Thr-90, Asp-92, Asp-105, and Gln-124.

This sequence belongs to the RecU family. Mg(2+) is required as a cofactor.

Its subcellular location is the cytoplasm. It carries out the reaction Endonucleolytic cleavage at a junction such as a reciprocal single-stranded crossover between two homologous DNA duplexes (Holliday junction).. In terms of biological role, endonuclease that resolves Holliday junction intermediates in genetic recombination. Cleaves mobile four-strand junctions by introducing symmetrical nicks in paired strands. Promotes annealing of linear ssDNA with homologous dsDNA. Required for DNA repair, homologous recombination and chromosome segregation. In Leuconostoc citreum (strain KM20), this protein is Holliday junction resolvase RecU.